A 164-amino-acid chain; its full sequence is Lipoprotein signal peptidase (164 aa).

The next 3 membrane-spanning stretches (helical) occupy residues 12 to 32 (WLWLVVVVLIIDLGSKYLILQ), 70 to 90 (WFFAGIAIGISVILAVMMYRS), and 102 to 122 (ALIIGGALGNLFDRLWHGFVV). Active-site residues include Asp-123 and Asp-141. A helical transmembrane segment spans residues 137 to 157 (FNLADTAICVGAALIVLEGFL).

The protein belongs to the peptidase A8 family.

The protein localises to the cell inner membrane. The enzyme catalyses Release of signal peptides from bacterial membrane prolipoproteins. Hydrolyzes -Xaa-Yaa-Zaa-|-(S,diacylglyceryl)Cys-, in which Xaa is hydrophobic (preferably Leu), and Yaa (Ala or Ser) and Zaa (Gly or Ala) have small, neutral side chains.. It participates in protein modification; lipoprotein biosynthesis (signal peptide cleavage). Its function is as follows. This protein specifically catalyzes the removal of signal peptides from prolipoproteins. The chain is Lipoprotein signal peptidase from Shigella sonnei (strain Ss046).